Reading from the N-terminus, the 110-residue chain is Large ribosomal subunit protein uL22 (110 aa).

This sequence belongs to the universal ribosomal protein uL22 family. In terms of assembly, part of the 50S ribosomal subunit.

This protein binds specifically to 23S rRNA; its binding is stimulated by other ribosomal proteins, e.g. L4, L17, and L20. It is important during the early stages of 50S assembly. It makes multiple contacts with different domains of the 23S rRNA in the assembled 50S subunit and ribosome. Functionally, the globular domain of the protein is located near the polypeptide exit tunnel on the outside of the subunit, while an extended beta-hairpin is found that lines the wall of the exit tunnel in the center of the 70S ribosome. The polypeptide is Large ribosomal subunit protein uL22 (Aggregatibacter actinomycetemcomitans (Actinobacillus actinomycetemcomitans)).